Reading from the N-terminus, the 311-residue chain is Methionyl-tRNA formyltransferase (311 aa).

Residue Ser-110–Pro-113 participates in (6S)-5,6,7,8-tetrahydrofolate binding.

The protein belongs to the Fmt family.

It carries out the reaction L-methionyl-tRNA(fMet) + (6R)-10-formyltetrahydrofolate = N-formyl-L-methionyl-tRNA(fMet) + (6S)-5,6,7,8-tetrahydrofolate + H(+). Functionally, attaches a formyl group to the free amino group of methionyl-tRNA(fMet). The formyl group appears to play a dual role in the initiator identity of N-formylmethionyl-tRNA by promoting its recognition by IF2 and preventing the misappropriation of this tRNA by the elongation apparatus. The polypeptide is Methionyl-tRNA formyltransferase (Streptococcus pyogenes serotype M2 (strain MGAS10270)).